The primary structure comprises 867 residues: DNA mismatch repair protein MutS (867 aa).

606-613 contributes to the ATP binding site; sequence GPNMSGKS.

The protein belongs to the DNA mismatch repair MutS family.

This protein is involved in the repair of mismatches in DNA. It is possible that it carries out the mismatch recognition step. This protein has a weak ATPase activity. This is DNA mismatch repair protein MutS from Oceanobacillus iheyensis (strain DSM 14371 / CIP 107618 / JCM 11309 / KCTC 3954 / HTE831).